The following is a 564-amino-acid chain: Arginine--tRNA ligase (564 aa).

The 'HIGH' region motif lies at 122-132 (PNIAKPFSIGH).

The protein belongs to the class-I aminoacyl-tRNA synthetase family. As to quaternary structure, monomer.

The protein resides in the cytoplasm. It carries out the reaction tRNA(Arg) + L-arginine + ATP = L-arginyl-tRNA(Arg) + AMP + diphosphate. In Lactococcus lactis subsp. cremoris (strain SK11), this protein is Arginine--tRNA ligase.